Reading from the N-terminus, the 106-residue chain is Large ribosomal subunit protein uL24 (106 aa).

It belongs to the universal ribosomal protein uL24 family. Part of the 50S ribosomal subunit.

One of two assembly initiator proteins, it binds directly to the 5'-end of the 23S rRNA, where it nucleates assembly of the 50S subunit. Functionally, one of the proteins that surrounds the polypeptide exit tunnel on the outside of the subunit. The protein is Large ribosomal subunit protein uL24 of Desulforamulus reducens (strain ATCC BAA-1160 / DSM 100696 / MI-1) (Desulfotomaculum reducens).